The primary structure comprises 88 residues: UPF0223 protein OB1419 (88 aa).

It belongs to the UPF0223 family.

This is UPF0223 protein OB1419 from Oceanobacillus iheyensis (strain DSM 14371 / CIP 107618 / JCM 11309 / KCTC 3954 / HTE831).